A 254-amino-acid chain; its full sequence is L-arabinose 1-dehydrogenase (NAD(P)(+)) (254 aa).

Tyr-142 serves as the catalytic Proton acceptor. Positions 142 and 146 each coordinate NAD(+).

The protein belongs to the NAD(P)-dependent epimerase/dehydratase family. Homotetramer.

It catalyses the reaction alpha-L-arabinopyanose + NAD(+) = L-arabinono-1,4-lactone + NADH + H(+). The catalysed reaction is alpha-L-arabinopyanose + NADP(+) = L-arabinono-1,4-lactone + NADPH + H(+). It functions in the pathway carbohydrate degradation; L-arabinose degradation via L-arabinono-1,4-lactone pathway. Functionally, L-AraDH initiates the degradation of L-arabinose. Catalyzes the NAD(P)(+)-dependent conversion of L-arabinose to L-arabino-gamma-lactone. It is highly specific for L-arabinose as substrate and can use both NADP(+) and NAD(+) as electron acceptor, with a slight preference for NADP(+). This is L-arabinose 1-dehydrogenase (NAD(P)(+)) from Haloferax volcanii (strain ATCC 29605 / DSM 3757 / JCM 8879 / NBRC 14742 / NCIMB 2012 / VKM B-1768 / DS2) (Halobacterium volcanii).